The following is a 127-amino-acid chain: Large-conductance mechanosensitive channel (127 aa).

Helical transmembrane passes span 9–29 (EFAMRGNVIDLAVAVVMGVAF), 32–52 (IVTALVDGIIMPCVGLLLGGI), and 75–95 (VIDFIIVAFAIFVLIKLINLL).

Belongs to the MscL family. In terms of assembly, homopentamer.

Its subcellular location is the cell inner membrane. Channel that opens in response to stretch forces in the membrane lipid bilayer. May participate in the regulation of osmotic pressure changes within the cell. This Legionella pneumophila (strain Paris) protein is Large-conductance mechanosensitive channel.